A 683-amino-acid polypeptide reads, in one-letter code: uncharacterized protein (683 aa).

A run of 14 helical transmembrane segments spans residues 12-32 (LLLY…MMGL), 41-61 (LWLG…IGLI), 84-104 (MAIA…GILF), 110-130 (GLAY…LLAP), 162-182 (IAVL…IQGV), 194-214 (FAVG…LGGM), 221-241 (QVAQ…MIAW), 377-397 (LNFV…PHIL), 413-433 (VAWA…LAAL), 495-515 (IAGL…AAAL), 548-568 (VTTA…VTSL), 573-593 (ILFL…PVLV), 603-623 (AAGA…YIIV), and 645-665 (IASG…VSLL).

This sequence belongs to the sodium:solute symporter (SSF) (TC 2.A.21) family.

The protein localises to the cell membrane. This is an uncharacterized protein from Cupriavidus necator (strain ATCC 17699 / DSM 428 / KCTC 22496 / NCIMB 10442 / H16 / Stanier 337) (Ralstonia eutropha).